The sequence spans 1080 residues: Histone-lysine N-methyltransferase, H3 lysine-4 specific (1080 aa).

Disordered regions lie at residues 1–46, 54–73, and 78–121; these read MSNY…SQYN, NDGTRRRYNDDRPHSSNNAS, and YATN…SSGS. The segment at 1 to 230 is binds SWD2; it reads MSNYYRRAHA…THRKCRNSLI (230 aa). The span at 11–28 shows a compositional bias: polar residues; it reads SSGSYRQPQEQPQYSRSG. The segment covering 29–46 has biased composition (low complexity); it reads HYQYSNGHSHQQYSSQYN. Residues 54 to 67 are compositionally biased toward basic and acidic residues; the sequence is NDGTRRRYNDDRPH. Polar residues-rich tracts occupy residues 78–87 and 99–121; these read YATNNSQSGP and RGMSQSRYSNSNVHNTLASSSGS. The segment at 230-569 is binds RNA; sequence ILLPRISYDR…ALDHANFPEL (340 aa). Residues 356-569 are binds SHG1; it reads KKLQKLQENL…ALDHANFPEL (214 aa). The residue at position 625 (Ser-625) is a Phosphoserine. Positions 646 to 729 are disordered; the sequence is AHLLNEETDS…DQNGSSDVLD (84 aa). Acidic residues predominate over residues 674-692; sequence DEEDENMTSSSSEEEEEEA. A compositionally biased stretch (basic and acidic residues) spans 693 to 712; the sequence is PDKKFKSESEPTTPESDHLH. The interval 762–938 is binds SPP1; sequence MDLQNAIKDE…SLNQLNKRKK (177 aa). Residues 762–938 form a contributes to RNA binding region; the sequence is MDLQNAIKDE…SLNQLNKRKK (177 aa). The interval 762-938 is required for catalytic activity; sequence MDLQNAIKDE…SLNQLNKRKK (177 aa). Thr-875 is modified (phosphothreonine). 2 stretches are compositionally biased toward basic and acidic residues: residues 877-890 and 899-909; these read ELCQREESSNKEPS and SSRDNRASNRR. Residues 877 to 909 form a disordered region; the sequence is ELCQREESSNKEPSDSVPQEVSSSRDNRASNRR. Residues 904–909 carry the RxxxRR motif motif; the sequence is RASNRR. Residues 938–1055 form the SET domain; sequence KPVMFARSAI…ASEELTYDYK (118 aa). Tyr-1054 lines the S-adenosyl-L-methionine pocket. The region spanning 1064 to 1080 is the Post-SET domain; the sequence is ERLPCLCGAPNCKGFLN.

The protein belongs to the class V-like SAM-binding methyltransferase superfamily. As to quaternary structure, component of the Set1C/COMPASS complex which consists of SET1(2), BRE2(2), SPP1(2), SDC1(1), SHG1(1), SWD1(1), SWD2(1), and SWD3(1). Interacts with MEC3.

It localises to the nucleus. The protein localises to the chromosome. The enzyme catalyses L-lysyl(4)-[histone H3] + 3 S-adenosyl-L-methionine = N(6),N(6),N(6)-trimethyl-L-lysyl(4)-[histone H3] + 3 S-adenosyl-L-homocysteine + 3 H(+). It carries out the reaction N(6)-methyl-L-lysyl(4)-[histone H3] + S-adenosyl-L-methionine = N(6),N(6)-dimethyl-L-lysyl(4)-[histone H3] + S-adenosyl-L-homocysteine + H(+). The catalysed reaction is N(6),N(6)-dimethyl-L-lysyl(4)-[histone H3] + S-adenosyl-L-methionine = N(6),N(6),N(6)-trimethyl-L-lysyl(4)-[histone H3] + S-adenosyl-L-homocysteine + H(+). In terms of biological role, catalytic component of the COMPASS (Set1C) complex that specifically mono-, di- and trimethylates histone H3 to form H3K4me1/2/3. Binds RNAs involved in chromosome segregation, splicing and transcriptional regulation; appears to bind transcripts both co- and post-transcriptionally and binding might negatively affect its histone methyltransferase activity. COMPASS recognizes ubiquitinated H2B on one face of the nucleosome which stimulates the methylation of H3 on the opposing face. Plays a role in telomere length maintenance and transcription elongation regulation. The chain is Histone-lysine N-methyltransferase, H3 lysine-4 specific from Saccharomyces cerevisiae (strain ATCC 204508 / S288c) (Baker's yeast).